The primary structure comprises 240 residues: uncharacterized protein (240 aa).

The protein to H.influenzae HI_0575.

This is an uncharacterized protein from Escherichia coli (strain K12).